The following is a 146-amino-acid chain: Large ribosomal subunit protein uL15 (146 aa).

The span at 1 to 13 shows a compositional bias: basic and acidic residues; sequence MKLHELKPAEGSR. A disordered region spans residues 1 to 51; it reads MKLHELKPAEGSRKVRNRVGRGIGSGNGKTAGKGHKGQNARSGGGVRLGFE. Composition is skewed to gly residues over residues 21–31 and 42–51; these read RGIGSGNGKTA and SGGGVRLGFE.

The protein belongs to the universal ribosomal protein uL15 family. Part of the 50S ribosomal subunit.

Functionally, binds to the 23S rRNA. This Bacillus cereus (strain G9842) protein is Large ribosomal subunit protein uL15.